Reading from the N-terminus, the 432-residue chain is Trigger factor (432 aa).

Residues 161-246 (GTRATINFVG…VVKVESRELP (86 aa)) form the PPIase FKBP-type domain.

This sequence belongs to the FKBP-type PPIase family. Tig subfamily.

Its subcellular location is the cytoplasm. The enzyme catalyses [protein]-peptidylproline (omega=180) = [protein]-peptidylproline (omega=0). Involved in protein export. Acts as a chaperone by maintaining the newly synthesized protein in an open conformation. Functions as a peptidyl-prolyl cis-trans isomerase. This chain is Trigger factor, found in Aliivibrio fischeri (strain ATCC 700601 / ES114) (Vibrio fischeri).